A 476-amino-acid polypeptide reads, in one-letter code: Cytochrome c oxidase subunit 1 (476 aa).

A helical transmembrane segment spans residues 19–39; sequence LYYLWFSFLFGTYGFLLSVIL. A Ca(2+)-binding site is contributed by Glu42. Helical transmembrane passes span 61 to 81, 105 to 125, 144 to 164, 194 to 214, 240 to 260, 278 to 298, 309 to 329, and 345 to 365; these read MIFT…GLFG, ISLL…AAEF, LSPV…IASI, IIIT…GVLM, LFWF…FGVI, MILA…HHMY, FFTS…FNWL, and LLCL…VILG. His66 lines the Fe(II)-heme a pocket. His246 serves as a coordination point for Cu cation. Residues 246–250 constitute a cross-link (1'-histidyl-3'-tyrosine (His-Tyr)); that stretch reads HPEVY. An O2-binding site is contributed by Tyr250. Cu cation is bound by residues His295 and His296. Mg(2+) contacts are provided by His374 and Asp375. The next 2 helical transmembrane spans lie at 379–399 and 415–435; these read VIAH…FTCV and TLIV…FLPM. Position 382 (His382) interacts with heme a3. His384 is a Fe(II)-heme a binding site. Ca(2+) is bound at residue Pro448. A helical membrane pass occupies residues 455-475; the sequence is NGWNMICSIGSTMTLFGLLIF.

This sequence belongs to the heme-copper respiratory oxidase family. In terms of assembly, component of the cytochrome c oxidase (complex IV, CIV), a multisubunit enzyme composed of a catalytic core of 3 subunits and several supernumerary subunits. The complex exists as a monomer or a dimer and forms supercomplexes (SCs) in the inner mitochondrial membrane with ubiquinol-cytochrome c oxidoreductase (cytochrome b-c1 complex, complex III, CIII). Requires heme as cofactor. It depends on Cu cation as a cofactor.

Its subcellular location is the mitochondrion inner membrane. The catalysed reaction is 4 Fe(II)-[cytochrome c] + O2 + 8 H(+)(in) = 4 Fe(III)-[cytochrome c] + 2 H2O + 4 H(+)(out). It functions in the pathway energy metabolism; oxidative phosphorylation. Its function is as follows. Component of the cytochrome c oxidase, the last enzyme in the mitochondrial electron transport chain which drives oxidative phosphorylation. The respiratory chain contains 3 multisubunit complexes succinate dehydrogenase (complex II, CII), ubiquinol-cytochrome c oxidoreductase (cytochrome b-c1 complex, complex III, CIII) and cytochrome c oxidase (complex IV, CIV), that cooperate to transfer electrons derived from NADH and succinate to molecular oxygen, creating an electrochemical gradient over the inner membrane that drives transmembrane transport and the ATP synthase. Cytochrome c oxidase is the component of the respiratory chain that catalyzes the reduction of oxygen to water. Electrons originating from reduced cytochrome c in the intermembrane space (IMS) are transferred via the dinuclear copper A center (CU(A)) of subunit 2 and heme A of subunit 1 to the active site in subunit 1, a binuclear center (BNC) formed by heme A3 and copper B (CU(B)). The BNC reduces molecular oxygen to 2 water molecules using 4 electrons from cytochrome c in the IMS and 4 protons from the mitochondrial matrix. The chain is Cytochrome c oxidase subunit 1 (COI) from Plasmodium berghei.